An 87-amino-acid polypeptide reads, in one-letter code: Asparagine--tRNA ligase, cytoplasmic (87 aa).

It belongs to the class-II aminoacyl-tRNA synthetase family.

It is found in the cytoplasm. It catalyses the reaction tRNA(Asn) + L-asparagine + ATP = L-asparaginyl-tRNA(Asn) + AMP + diphosphate + H(+). This is Asparagine--tRNA ligase, cytoplasmic (DED81) from Saccharomyces paradoxus (Yeast).